The sequence spans 168 residues: Large ribosomal subunit protein uL10 (168 aa).

It belongs to the universal ribosomal protein uL10 family. As to quaternary structure, part of the ribosomal stalk of the 50S ribosomal subunit. The N-terminus interacts with L11 and the large rRNA to form the base of the stalk. The C-terminus forms an elongated spine to which L12 dimers bind in a sequential fashion forming a multimeric L10(L12)X complex.

Forms part of the ribosomal stalk, playing a central role in the interaction of the ribosome with GTP-bound translation factors. The protein is Large ribosomal subunit protein uL10 of Lacticaseibacillus casei (strain BL23) (Lactobacillus casei).